The chain runs to 788 residues: Putative wall-associated receptor kinase-like 11 (788 aa).

Positions 1-27 are cleaved as a signal peptide; that stretch reads MRCDNNYSFSILFSLLLILILDSKVVS. Topologically, residues 28-375 are extracellular; the sequence is LSTSCQSKSV…TFNCIGNKTR (348 aa). Asn65, Asn80, Asn121, Asn159, Asn233, Asn253, Asn278, Asn295, and Asn310 each carry an N-linked (GlcNAc...) asparagine glycan. The atypical EGF-like stretch occupies residues 306 to 369; sequence CICNNVTISG…CVNLPGTFNC (64 aa). Disulfide bonds link Cys308–Cys321, Cys343–Cys360, and Cys354–Cys369. The N-linked (GlcNAc...) asparagine glycan is linked to Asn372. The chain crosses the membrane as a helical span at residues 376-396; that stretch reads VTMIGVGSAFGILVLVVGIWW. At 397-788 the chain is on the cytoplasmic side; the sequence is LRKFLKKRRM…QPLFPHPTWI (392 aa). The Protein kinase domain maps to 451–726; the sequence is FSESRILGQG…KVFTDLEKIL (276 aa). ATP contacts are provided by residues 457–465 and Lys479; that span reads LGQGGQGTV. The residue at position 524 (Tyr524) is a Phosphotyrosine. The active-site Proton acceptor is Asp576. Residues Thr610 and Thr615 each carry the phosphothreonine modification. Tyr623 is subject to Phosphotyrosine.

This sequence belongs to the protein kinase superfamily. Ser/Thr protein kinase family.

The protein resides in the membrane. It carries out the reaction L-seryl-[protein] + ATP = O-phospho-L-seryl-[protein] + ADP + H(+). The catalysed reaction is L-threonyl-[protein] + ATP = O-phospho-L-threonyl-[protein] + ADP + H(+). Putative serine/threonine-protein kinase that may function as a signaling receptor of extracellular matrix component. In Arabidopsis thaliana (Mouse-ear cress), this protein is Putative wall-associated receptor kinase-like 11 (WAKL11).